A 156-amino-acid chain; its full sequence is Ribosome maturation factor RimP (156 aa).

It belongs to the RimP family.

Its subcellular location is the cytoplasm. In terms of biological role, required for maturation of 30S ribosomal subunits. The polypeptide is Ribosome maturation factor RimP (Halalkalibacterium halodurans (strain ATCC BAA-125 / DSM 18197 / FERM 7344 / JCM 9153 / C-125) (Bacillus halodurans)).